Consider the following 1220-residue polypeptide: DNA-directed RNA polymerase subunit beta (1220 aa).

It belongs to the RNA polymerase beta chain family. The RNAP catalytic core consists of 2 alpha, 1 beta, 1 beta' and 1 omega subunit. When a sigma factor is associated with the core the holoenzyme is formed, which can initiate transcription.

The catalysed reaction is RNA(n) + a ribonucleoside 5'-triphosphate = RNA(n+1) + diphosphate. In terms of biological role, DNA-dependent RNA polymerase catalyzes the transcription of DNA into RNA using the four ribonucleoside triphosphates as substrates. In Mesomycoplasma hyopneumoniae (strain 7448) (Mycoplasma hyopneumoniae), this protein is DNA-directed RNA polymerase subunit beta.